Consider the following 307-residue polypeptide: Elongation factor Ts (307 aa).

An involved in Mg(2+) ion dislocation from EF-Tu region spans residues 80 to 83; sequence TDFV.

This sequence belongs to the EF-Ts family.

The protein resides in the cytoplasm. Functionally, associates with the EF-Tu.GDP complex and induces the exchange of GDP to GTP. It remains bound to the aminoacyl-tRNA.EF-Tu.GTP complex up to the GTP hydrolysis stage on the ribosome. The chain is Elongation factor Ts from Rhodopseudomonas palustris (strain BisA53).